The chain runs to 381 residues: Cobalt-precorrin-5B C(1)-methyltransferase (381 aa).

Belongs to the CbiD family.

It catalyses the reaction Co-precorrin-5B + S-adenosyl-L-methionine = Co-precorrin-6A + S-adenosyl-L-homocysteine. The protein operates within cofactor biosynthesis; adenosylcobalamin biosynthesis; cob(II)yrinate a,c-diamide from sirohydrochlorin (anaerobic route): step 6/10. In terms of biological role, catalyzes the methylation of C-1 in cobalt-precorrin-5B to form cobalt-precorrin-6A. This is Cobalt-precorrin-5B C(1)-methyltransferase from Prochlorococcus marinus (strain SARG / CCMP1375 / SS120).